Here is a 2439-residue protein sequence, read N- to C-terminus: Centrosomal protein of 290 kDa (2439 aa).

Coiled-coil stretches lie at residues alanine 75–glutamate 913 and asparagine 1271–threonine 1576. Disordered stretches follow at residues glutamate 1802–alanine 1824, glutamate 1867–lysine 1890, and glutamate 2017–glutamate 2048. Residues serine 2039–glutamate 2048 are compositionally biased toward basic and acidic residues. Residues glutamine 2046–aspartate 2394 adopt a coiled-coil conformation.

Part of the tectonic-like complex (also named B9 complex).

It is found in the cytoplasm. The protein localises to the cytoskeleton. Its subcellular location is the microtubule organizing center. It localises to the centrosome. The protein resides in the centriolar satellite. It is found in the nucleus. The protein localises to the cilium basal body. Functionally, involved in early and late steps in cilia formation. May play a role in early ciliogenesis in the disappearance of centriolar satellites and in the transition of primary ciliar vesicles (PCVs) to capped ciliary vesicles (CCVs). In the ciliary transition zone is part of the tectonic-like complex which is required for tissue-specific ciliogenesis and may regulate ciliary membrane composition. Involved in regulation of the BBSome complex integrity and in ciliary targeting of selected BBSome cargos. Required for the correct localization of ciliary and phototransduction proteins in retinal photoreceptor cells; may play a role in ciliary transport processes. Involved in development of the nervous system and kidney. The chain is Centrosomal protein of 290 kDa (cep290) from Danio rerio (Zebrafish).